Here is a 286-residue protein sequence, read N- to C-terminus: 2-dehydro-3-deoxyphosphooctonate aldolase (286 aa).

It belongs to the KdsA family.

The protein localises to the cytoplasm. The catalysed reaction is D-arabinose 5-phosphate + phosphoenolpyruvate + H2O = 3-deoxy-alpha-D-manno-2-octulosonate-8-phosphate + phosphate. Its pathway is carbohydrate biosynthesis; 3-deoxy-D-manno-octulosonate biosynthesis; 3-deoxy-D-manno-octulosonate from D-ribulose 5-phosphate: step 2/3. It participates in bacterial outer membrane biogenesis; lipopolysaccharide biosynthesis. The chain is 2-dehydro-3-deoxyphosphooctonate aldolase from Haemophilus ducreyi (strain 35000HP / ATCC 700724).